The following is a 177-amino-acid chain: Large ribosomal subunit protein uL6 (177 aa).

It belongs to the universal ribosomal protein uL6 family. As to quaternary structure, part of the 50S ribosomal subunit.

Functionally, this protein binds to the 23S rRNA, and is important in its secondary structure. It is located near the subunit interface in the base of the L7/L12 stalk, and near the tRNA binding site of the peptidyltransferase center. This Allorhizobium ampelinum (strain ATCC BAA-846 / DSM 112012 / S4) (Agrobacterium vitis (strain S4)) protein is Large ribosomal subunit protein uL6.